Reading from the N-terminus, the 318-residue chain is NADH-ubiquinone oxidoreductase chain 1 (318 aa).

8 consecutive transmembrane segments (helical) span residues 3–23 (FINI…LTLV), 70–90 (LFII…IPLP), 100–120 (LGML…LWSG), 146–166 (MAII…QMLI), 171–191 (HIWL…STLA), 231–251 (IILM…HINY), 254–273 (LYST…FLWI), and 294–314 (LPLT…LAGI).

This sequence belongs to the complex I subunit 1 family. Core subunit of respiratory chain NADH dehydrogenase (Complex I) which is composed of 45 different subunits.

Its subcellular location is the mitochondrion inner membrane. The catalysed reaction is a ubiquinone + NADH + 5 H(+)(in) = a ubiquinol + NAD(+) + 4 H(+)(out). Core subunit of the mitochondrial membrane respiratory chain NADH dehydrogenase (Complex I) which catalyzes electron transfer from NADH through the respiratory chain, using ubiquinone as an electron acceptor. Essential for the catalytic activity and assembly of complex I. The protein is NADH-ubiquinone oxidoreductase chain 1 of Rattus norvegicus (Rat).